The chain runs to 447 residues: Serine/threonine-protein phosphatase 2A 55 kDa regulatory subunit B gamma isoform (447 aa).

WD repeat units lie at residues 22 to 61, 87 to 128, 171 to 209, 220 to 260, 279 to 317, 334 to 375, and 410 to 446; these read TEAD…KNAP, EIEE…KRPE, GHTY…RSFN, DLTE…LCDK, EIIS…RPIE, ENDC…DVTL, and DFTK…NSDV.

Belongs to the phosphatase 2A regulatory subunit B family. PP2A consists of a common heterodimeric core enzyme, composed of a 36 kDa catalytic subunit (subunit C) and a 65 kDa constant regulatory subunit (PR65 or subunit A), that associates with a variety of regulatory subunits. Proteins that associate with the core dimer include three families of regulatory subunits B (the R2/B/PR55/B55, R3/B''/PR72/PR130/PR59 and R5/B'/B56 families), the 48 kDa variable regulatory subunit, viral proteins, and cell signaling molecules. Interacts with IER5. As to expression, highly expressed in brain.

Its function is as follows. The B regulatory subunit might modulate substrate selectivity and catalytic activity, and might also direct the localization of the catalytic enzyme to a particular subcellular compartment. The sequence is that of Serine/threonine-protein phosphatase 2A 55 kDa regulatory subunit B gamma isoform (PPP2R2C) from Oryctolagus cuniculus (Rabbit).